Here is a 230-residue protein sequence, read N- to C-terminus: MTTLTARPEAITFDPQQTALIVVDMQNAYATPGGYLDLAGFDVSTTRPVIANIQTAVTAARAAGMLIIWFQNGWDEQYVEAGGPGSPNFHKSNALKTMRKQPQLQGKLLAKGSWDYQLVDELVPQPGDIVLPKPRYSGFFNTPLDSILRSRGIRHLVFTGIATNVCVESTLRDGFFLEYFGVVLEDATHQAGPEFAQKAALFNIETFFGWVSDVETFCDALSSTSFARIA.

Residue D24 is the Proton acceptor of the active site. K133 is an active-site residue. The active-site Nucleophile is the C166.

This sequence belongs to the isochorismatase family. RutB subfamily.

The enzyme catalyses (Z)-3-ureidoacrylate + H2O + H(+) = (Z)-3-aminoacrylate + NH4(+) + CO2. It carries out the reaction (Z)-3-ureidoacrylate + H2O = (Z)-3-aminoacrylate + carbamate + H(+). It catalyses the reaction (Z)-2-methylureidoacrylate + H2O + H(+) = (Z)-2-methylaminoacrylate + NH4(+) + CO2. Functionally, hydrolyzes ureidoacrylate to form aminoacrylate and carbamate. The carbamate hydrolyzes spontaneously, thereby releasing one of the nitrogen atoms of the pyrimidine ring as ammonia and one of its carbon atoms as CO2. In Escherichia coli O81 (strain ED1a), this protein is Ureidoacrylate amidohydrolase RutB.